Consider the following 116-residue polypeptide: Large ribosomal subunit protein uL18 (116 aa).

Belongs to the universal ribosomal protein uL18 family. In terms of assembly, part of the 50S ribosomal subunit; part of the 5S rRNA/L5/L18/L25 subcomplex. Contacts the 5S and 23S rRNAs.

Its function is as follows. This is one of the proteins that bind and probably mediate the attachment of the 5S RNA into the large ribosomal subunit, where it forms part of the central protuberance. The sequence is that of Large ribosomal subunit protein uL18 from Pseudomonas syringae pv. tomato (strain ATCC BAA-871 / DC3000).